A 151-amino-acid polypeptide reads, in one-letter code: 3-hydroxyacyl-[acyl-carrier-protein] dehydratase FabZ (151 aa).

Histidine 56 is a catalytic residue.

This sequence belongs to the thioester dehydratase family. FabZ subfamily.

The protein localises to the cytoplasm. It carries out the reaction a (3R)-hydroxyacyl-[ACP] = a (2E)-enoyl-[ACP] + H2O. Functionally, involved in unsaturated fatty acids biosynthesis. Catalyzes the dehydration of short chain beta-hydroxyacyl-ACPs and long chain saturated and unsaturated beta-hydroxyacyl-ACPs. This chain is 3-hydroxyacyl-[acyl-carrier-protein] dehydratase FabZ, found in Rhodopseudomonas palustris (strain BisB18).